Here is a 102-residue protein sequence, read N- to C-terminus: Thioredoxin (102 aa).

Residues 1 to 102 (MVQIVSQDNF…SLVKLISKHQ (102 aa)) form the Thioredoxin domain. C28 and C31 are disulfide-bonded.

The protein belongs to the thioredoxin family.

Participates in various redox reactions through the reversible oxidation of its active center dithiol to a disulfide and catalyzes dithiol-disulfide exchange reactions. The sequence is that of Thioredoxin (trxA) from Chlamydia muridarum (strain MoPn / Nigg).